Here is a 778-residue protein sequence, read N- to C-terminus: Aerobic respiration control sensor protein ArcB (778 aa).

At 1–25 (MKQIRLLAQYYVDLMMKLGLVRFSM) the chain is on the cytoplasmic side. Residues 26 to 46 (LLALALVVLAIVVQMAVTMVL) form a helical membrane-spanning segment. Residues 47-57 (HGQVESIDVIR) are Periplasmic-facing. A helical transmembrane segment spans residues 58–78 (SIFFGLLITPWAVYFLSVVVE). At 79–778 (QLEESRQRLS…KAWVAKATKK (700 aa)) the chain is on the cytoplasmic side. Residues 153 to 223 (QSSFLRSFLD…ETDEKVFRHN (71 aa)) form the PAS domain. The 53-residue stretch at 226 to 278 (LTYEQWLDYPDGRKACFEIRKVPYYDRVGKRHGLMGFGRDITERKRYQDALER) folds into the PAC domain. The Histidine kinase domain occupies 289 to 507 (TISHELRTPL…TFTLTIHAPS (219 aa)). Histidine 292 bears the Phosphohistidine; by autocatalysis mark. The Response regulatory domain maps to 527-643 (NVLLVEDIEL…ALTAMIKKFW (117 aa)). Residue aspartate 576 is modified to 4-aspartylphosphate. In terms of domain architecture, HPt spans 678–771 (GPKLITDGLA…RHDVEVLKAW (94 aa)). At histidine 717 the chain carries Phosphohistidine.

Post-translationally, activation requires a sequential transfer of a phosphate group from a His in the primary transmitter domain, to an Asp in the receiver domain and to a His in the secondary transmitter domain.

It is found in the cell inner membrane. The enzyme catalyses ATP + protein L-histidine = ADP + protein N-phospho-L-histidine.. Its function is as follows. Member of the two-component regulatory system ArcB/ArcA. Sensor-regulator protein for anaerobic repression of the arc modulon. Activates ArcA via a four-step phosphorelay. ArcB can also dephosphorylate ArcA by a reverse phosphorelay involving His-717 and Asp-576. This Escherichia coli O157:H7 protein is Aerobic respiration control sensor protein ArcB (arcB).